The sequence spans 350 residues: Type II restriction enzyme NgoBI (350 aa).

It catalyses the reaction Endonucleolytic cleavage of DNA to give specific double-stranded fragments with terminal 5'-phosphates.. A P subtype restriction enzyme that recognizes the double-stranded sequence 5'-RGCGCY-3'; the cleavage site is unknown. This Neisseria gonorrhoeae protein is Type II restriction enzyme NgoBI (ngoBIR).